A 352-amino-acid polypeptide reads, in one-letter code: Large ribosomal subunit protein uL10 (352 aa).

Acidic residues predominate over residues 286-297 (DDEDALPEELQD). The interval 286–352 (DDEDALPEEL…GAEGLGEMFG (67 aa)) is disordered. The span at 299 to 310 (DAPAAPAGGEAD) shows a compositional bias: low complexity. Residues 324-340 (EADDADDSDDDDDDDDG) are compositionally biased toward acidic residues. A compositionally biased stretch (gly residues) spans 343–352 (GAEGLGEMFG).

The protein belongs to the universal ribosomal protein uL10 family. Part of the 50S ribosomal subunit. Forms part of the ribosomal stalk which helps the ribosome interact with GTP-bound translation factors. Forms a heptameric L10(L12)2(L12)2(L12)2 complex, where L10 forms an elongated spine to which the L12 dimers bind in a sequential fashion.

Forms part of the ribosomal stalk, playing a central role in the interaction of the ribosome with GTP-bound translation factors. This is Large ribosomal subunit protein uL10 from Halobacterium salinarum (strain ATCC 700922 / JCM 11081 / NRC-1) (Halobacterium halobium).